A 173-amino-acid chain; its full sequence is U1 small nuclear ribonucleoprotein C (173 aa).

The segment at 4-36 (YYCDYCDTYLTHDSPSVRKTHCQGRKHKDNVKF) adopts a Matrin-type zinc-finger fold. A disordered region spans residues 72-100 (AAIPPPANMQGPPRPVPPGPMGPGPNMLG). Pro residues predominate over residues 73-94 (AIPPPANMQGPPRPVPPGPMGP).

This sequence belongs to the U1 small nuclear ribonucleoprotein C family. As to quaternary structure, U1 snRNP is composed of the 7 core Sm proteins B/B', D1, D2, D3, E, F and G that assemble in a heptameric protein ring on the Sm site of the small nuclear RNA to form the core snRNP, and at least 3 U1 snRNP-specific proteins U1-70K, U1-A and U1-C. U1-C interacts with U1 snRNA and the 5' splice-site region of the pre-mRNA.

The protein resides in the nucleus. Its function is as follows. Component of the spliceosomal U1 snRNP, which is essential for recognition of the pre-mRNA 5' splice-site and the subsequent assembly of the spliceosome. U1-C is directly involved in initial 5' splice-site recognition for both constitutive and regulated alternative splicing. The interaction with the 5' splice-site seems to precede base-pairing between the pre-mRNA and the U1 snRNA. Stimulates commitment or early (E) complex formation by stabilizing the base pairing of the 5' end of the U1 snRNA and the 5' splice-site region. The sequence is that of U1 small nuclear ribonucleoprotein C from Pediculus humanus subsp. corporis (Body louse).